A 115-amino-acid chain; its full sequence is Large ribosomal subunit protein uL22 (115 aa).

The protein belongs to the universal ribosomal protein uL22 family. Part of the 50S ribosomal subunit.

Functionally, this protein binds specifically to 23S rRNA; its binding is stimulated by other ribosomal proteins, e.g. L4, L17, and L20. It is important during the early stages of 50S assembly. It makes multiple contacts with different domains of the 23S rRNA in the assembled 50S subunit and ribosome. In terms of biological role, the globular domain of the protein is located near the polypeptide exit tunnel on the outside of the subunit, while an extended beta-hairpin is found that lines the wall of the exit tunnel in the center of the 70S ribosome. This Ligilactobacillus salivarius (strain UCC118) (Lactobacillus salivarius) protein is Large ribosomal subunit protein uL22.